A 95-amino-acid polypeptide reads, in one-letter code: Aspartyl/glutamyl-tRNA(Asn/Gln) amidotransferase subunit C (95 aa).

Belongs to the GatC family. In terms of assembly, heterotrimer of A, B and C subunits.

The catalysed reaction is L-glutamyl-tRNA(Gln) + L-glutamine + ATP + H2O = L-glutaminyl-tRNA(Gln) + L-glutamate + ADP + phosphate + H(+). It catalyses the reaction L-aspartyl-tRNA(Asn) + L-glutamine + ATP + H2O = L-asparaginyl-tRNA(Asn) + L-glutamate + ADP + phosphate + 2 H(+). Its function is as follows. Allows the formation of correctly charged Asn-tRNA(Asn) or Gln-tRNA(Gln) through the transamidation of misacylated Asp-tRNA(Asn) or Glu-tRNA(Gln) in organisms which lack either or both of asparaginyl-tRNA or glutaminyl-tRNA synthetases. The reaction takes place in the presence of glutamine and ATP through an activated phospho-Asp-tRNA(Asn) or phospho-Glu-tRNA(Gln). The protein is Aspartyl/glutamyl-tRNA(Asn/Gln) amidotransferase subunit C of Rhodopseudomonas palustris (strain TIE-1).